The chain runs to 144 residues: TSC22 domain family protein 1 (144 aa).

Positions 77–98 are leucine-zipper; the sequence is LKEQIKELIEKNSQLEQENNLL. A disordered region spans residues 109–144; sequence QFQAQLQTGSPPATTQPQGTTQPPAQPASQGSGPTA. Over residues 115-144 the composition is skewed to low complexity; sequence QTGSPPATTQPQGTTQPPAQPASQGSGPTA.

The protein belongs to the TSC-22/Dip/Bun family. In terms of assembly, forms homodimers. Forms a heterodimer with TSC22D4/THG1. Interacts with histone H1-2. Interacts with GNL3.

It is found in the cytoplasm. The protein localises to the nucleus. Its function is as follows. Transcriptional repressor. Plays a role in the repression of hematopoietic precursor cell growth. Promotes IL2 deprivation-induced apoptosis in T-lymphocytes, via repression of TSC22D3/GILZ transcription and activation of the caspase cascade. Positively regulates cell death in response to TGFB3 during mammary gland involution. In Bos taurus (Bovine), this protein is TSC22 domain family protein 1.